The sequence spans 354 residues: Uroporphyrinogen decarboxylase (354 aa).

Substrate is bound by residues 25 to 29 (RQAGR), Asp-75, Tyr-152, Thr-207, and His-330.

It belongs to the uroporphyrinogen decarboxylase family. As to quaternary structure, homodimer.

It localises to the cytoplasm. The enzyme catalyses uroporphyrinogen III + 4 H(+) = coproporphyrinogen III + 4 CO2. It participates in porphyrin-containing compound metabolism; protoporphyrin-IX biosynthesis; coproporphyrinogen-III from 5-aminolevulinate: step 4/4. Its function is as follows. Catalyzes the decarboxylation of four acetate groups of uroporphyrinogen-III to yield coproporphyrinogen-III. The polypeptide is Uroporphyrinogen decarboxylase (Xanthomonas oryzae pv. oryzae (strain PXO99A)).